The primary structure comprises 340 residues: Central glycolytic genes regulator (340 aa).

A DNA-binding region (H-T-H motif) is located at residues 37 to 56 (RRSLSASLGISERVLRGEVQ). Residues 149–152 (GGTT), R175, Q185, 250–251 (RR), E269, and K310 each bind beta-D-fructose 1,6-bisphosphate.

This sequence belongs to the SorC transcriptional regulatory family. Homotetramer. Binds primarily as a dimer to each half-site of the full-length operator, with much higher affinity for the right site. Then, both dimers interact, bridging the two-half sites of the operator region.

Stability and function are regulated by the effector molecule fructose-1,6-bisphosphate (FBP). In the presence of glucose, binding of FBP to the low-affinity sugar-binding site of CggR disrupts dimer/dimer bridging interactions and triggers a tetramer to dimer transition, which leaves two physically independent dimers on the target DNA and allows transcription of the downstream coding sequences by the RNA polymerase. In addition, FBP and several other phosphorylated compounds can bind to a high-affinity binding-site and protect CggR against aggregation and proteolysis. In terms of biological role, in the absence of glucose, represses the transcription of the gapA operon, which encodes five key glycolytic enzymes. Binds specifically to the cggR-gapA promoter region and blocks the progression of the RNA polymerase, leading to the arrest of the transcription. The protein is Central glycolytic genes regulator (cggR) of Bacillus subtilis (strain 168).